Here is a 1411-residue protein sequence, read N- to C-terminus: Protein ECM5 (1411 aa).

One can recognise a JmjN domain in the interval I118–F159. Residues R185–E279 form the ARID domain. Residues R285–P312 are disordered. Positions K476–S695 constitute a JmjC domain. A PHD-type zinc finger spans residues T1238–P1290.

The protein resides in the nucleus. Its function is as follows. May be involved in cell wall organization and biogenesis. The protein is Protein ECM5 (ECM5) of Saccharomyces cerevisiae (strain ATCC 204508 / S288c) (Baker's yeast).